Reading from the N-terminus, the 243-residue chain is MKMHIARESIVFLLNKHLQNTILTKKIEQECFLQADTPKKYLQYIKPFLINCMTKNITTDLVMKDSKRLEPYIILEMRDIIQMMFFRTLQKHIFFKKNTDLCTEYAQKIEASCYHYTYQQQEKTFLEEYSTRCGTINHIINCEKKSHQQQDNDALNKLISGELKPEQLVGMTFAELCPSAALKEKTEITLRSQQKVAEKTSQLYKCPNCKQRMCTYREVQTRALDEPSTIFCTCKKCGHEFIG.

The TFIIS central domain occupies 77–201; sequence MRDIIQMMFF…SQQKVAEKTS (125 aa). Residues 202 to 242 form a TFIIS-type zinc finger; the sequence is QLYKCPNCKQRMCTYREVQTRALDEPSTIFCTCKKCGHEFI. Residues Cys206, Cys209, Cys234, and Cys237 each coordinate Zn(2+).

It belongs to the TFS-II family.

Functionally, putative initiation factor. Necessary for efficient transcription elongation past template-encoded arresting sites. In Ornithodoros (relapsing fever ticks), this protein is Transcription factor TFIIS homolog.